We begin with the raw amino-acid sequence, 215 residues long: Vesicle-trafficking protein SEC22b-A (215 aa).

The Cytoplasmic segment spans residues 1 to 190 (MVLQTMIVRV…RSDAKYLNTR (190 aa)). Positions 6 to 119 (MIVRVADSLP…YSFIEFDTYI (114 aa)) constitute a Longin domain. The region spanning 134–194 (NLGNINSELH…KYLNTRSTYA (61 aa)) is the v-SNARE coiled-coil homology domain. The helical transmembrane segment at 191–213 (STYAKVAAGAVIIITLIIYVRFW) threads the bilayer. The Lumenal segment spans residues 214-215 (WL).

Belongs to the synaptobrevin family. As to quaternary structure, component of 2 distinct SNARE complexes.

Its subcellular location is the endoplasmic reticulum membrane. It localises to the endoplasmic reticulum-Golgi intermediate compartment membrane. The protein localises to the golgi apparatus. The protein resides in the cis-Golgi network membrane. It is found in the trans-Golgi network membrane. Its subcellular location is the melanosome. Its function is as follows. SNARE involved in targeting and fusion of ER-derived transport vesicles with the Golgi complex as well as Golgi-derived retrograde transport vesicles with the ER. This Danio rerio (Zebrafish) protein is Vesicle-trafficking protein SEC22b-A.